Consider the following 242-residue polypeptide: Small ribosomal subunit protein uS7m (242 aa).

The transit peptide at 1–37 directs the protein to the mitochondrion; sequence MAAPALRAPLRWSGLALGVRCAVWNLPGLTQVRGSRY. K228 is subject to N6-acetyllysine.

It belongs to the universal ribosomal protein uS7 family. As to quaternary structure, component of the mitochondrial ribosome small subunit (28S) which comprises a 12S rRNA and about 30 distinct proteins.

It localises to the mitochondrion. This Mus musculus (Mouse) protein is Small ribosomal subunit protein uS7m (Mrps7).